The following is a 77-amino-acid chain: UPF0213 protein VNG_2274C (77 aa).

Residues 1 to 75 (MHHVYVIECS…KQLSRAQKEA (75 aa)) form the GIY-YIG domain.

Belongs to the UPF0213 family.

This is UPF0213 protein VNG_2274C from Halobacterium salinarum (strain ATCC 700922 / JCM 11081 / NRC-1) (Halobacterium halobium).